Here is a 362-residue protein sequence, read N- to C-terminus: Chorismate synthase (362 aa).

The NADP(+) site is built by Arg-48 and Arg-54. Residues 125-127 (RSS), 237-238 (NA), Gly-277, 292-296 (KPTSS), and Arg-318 each bind FMN.

It belongs to the chorismate synthase family. Homotetramer. The cofactor is FMNH2.

It catalyses the reaction 5-O-(1-carboxyvinyl)-3-phosphoshikimate = chorismate + phosphate. It functions in the pathway metabolic intermediate biosynthesis; chorismate biosynthesis; chorismate from D-erythrose 4-phosphate and phosphoenolpyruvate: step 7/7. Catalyzes the anti-1,4-elimination of the C-3 phosphate and the C-6 proR hydrogen from 5-enolpyruvylshikimate-3-phosphate (EPSP) to yield chorismate, which is the branch point compound that serves as the starting substrate for the three terminal pathways of aromatic amino acid biosynthesis. This reaction introduces a second double bond into the aromatic ring system. This Idiomarina loihiensis (strain ATCC BAA-735 / DSM 15497 / L2-TR) protein is Chorismate synthase.